A 616-amino-acid chain; its full sequence is Dihydroxy-acid dehydratase (616 aa).

A Mg(2+)-binding site is contributed by aspartate 81. Cysteine 122 contributes to the [2Fe-2S] cluster binding site. Positions 123 and 124 each coordinate Mg(2+). Position 124 is an N6-carboxylysine (lysine 124). Cysteine 195 serves as a coordination point for [2Fe-2S] cluster. Glutamate 491 is a binding site for Mg(2+). Serine 517 functions as the Proton acceptor in the catalytic mechanism.

Belongs to the IlvD/Edd family. In terms of assembly, homodimer. The cofactor is [2Fe-2S] cluster. Requires Mg(2+) as cofactor.

It catalyses the reaction (2R)-2,3-dihydroxy-3-methylbutanoate = 3-methyl-2-oxobutanoate + H2O. The enzyme catalyses (2R,3R)-2,3-dihydroxy-3-methylpentanoate = (S)-3-methyl-2-oxopentanoate + H2O. The protein operates within amino-acid biosynthesis; L-isoleucine biosynthesis; L-isoleucine from 2-oxobutanoate: step 3/4. It functions in the pathway amino-acid biosynthesis; L-valine biosynthesis; L-valine from pyruvate: step 3/4. Its function is as follows. Functions in the biosynthesis of branched-chain amino acids. Catalyzes the dehydration of (2R,3R)-2,3-dihydroxy-3-methylpentanoate (2,3-dihydroxy-3-methylvalerate) into 2-oxo-3-methylpentanoate (2-oxo-3-methylvalerate) and of (2R)-2,3-dihydroxy-3-methylbutanoate (2,3-dihydroxyisovalerate) into 2-oxo-3-methylbutanoate (2-oxoisovalerate), the penultimate precursor to L-isoleucine and L-valine, respectively. In Escherichia coli O1:K1 / APEC, this protein is Dihydroxy-acid dehydratase.